The following is a 622-amino-acid chain: Glucose 1,6-bisphosphate synthase (622 aa).

Positions 73 and 175 each coordinate alpha-D-glucose 1,6-bisphosphate. The Phosphoserine intermediate role is filled by Ser175. The Mg(2+) site is built by Ser175, Asp332, and Asp334. At Ser175 the chain carries Phosphoserine. Alpha-D-glucose 1,6-bisphosphate contacts are provided by Asp336, Arg337, Glu434, Ser436, and Lys448.

It belongs to the phosphohexose mutase family.

The protein localises to the cytoplasm. The protein resides in the cytosol. It catalyses the reaction (2R)-3-phospho-glyceroyl phosphate + alpha-D-glucose 1-phosphate = alpha-D-glucose 1,6-bisphosphate + (2R)-3-phosphoglycerate + H(+). The catalysed reaction is alpha-D-glucose 6-phosphate + (2R)-3-phospho-glyceroyl phosphate = alpha-D-glucose 1,6-bisphosphate + (2R)-3-phosphoglycerate + H(+). It carries out the reaction (2R)-3-phospho-glyceroyl phosphate + alpha-D-ribose 1-phosphate = alpha-D-ribose 1,5-bisphosphate + (2R)-3-phosphoglycerate + H(+). The enzyme catalyses 2-deoxy-alpha-D-ribose 1-phosphate + (2R)-3-phospho-glyceroyl phosphate = 2-deoxy-alpha-D-ribose 1,5-bisphosphate + (2R)-3-phosphoglycerate + H(+). It catalyses the reaction (2R)-3-phospho-glyceroyl phosphate + alpha-D-mannose 1-phosphate = alpha-D-mannose 1,6-bisphosphate + (2R)-3-phosphoglycerate + H(+). In terms of biological role, glucose 1,6-bisphosphate synthase using 1,3-bisphosphoglycerate as a phosphate donor and a series of 1-phosphate sugars, including glucose 1-phosphate, mannose 1-phosphate, ribose 1-phosphate and deoxyribose 1-phosphate, as acceptors. In vitro, also exhibits very low phosphopentomutase and phosphoglucomutase activity which are most probably not physiologically relevant. The chain is Glucose 1,6-bisphosphate synthase from Homo sapiens (Human).